A 464-amino-acid chain; its full sequence is Arginine biosynthesis bifunctional protein ArgJ, chloroplastic (464 aa).

T208, K234, T245, E332, N459, and T464 together coordinate substrate. T245 acts as the Nucleophile in catalysis.

It belongs to the ArgJ family. Heterodimer of an alpha and a beta chain.

Its subcellular location is the plastid. The protein localises to the chloroplast. It carries out the reaction N(2)-acetyl-L-ornithine + L-glutamate = N-acetyl-L-glutamate + L-ornithine. The catalysed reaction is L-glutamate + acetyl-CoA = N-acetyl-L-glutamate + CoA + H(+). The protein operates within amino-acid biosynthesis; L-arginine biosynthesis; L-ornithine and N-acetyl-L-glutamate from L-glutamate and N(2)-acetyl-L-ornithine (cyclic): step 1/1. It functions in the pathway amino-acid biosynthesis; L-arginine biosynthesis; N(2)-acetyl-L-ornithine from L-glutamate: step 1/4. In terms of biological role, catalyzes two activities which are involved in the cyclic version of arginine biosynthesis: the synthesis of acetylglutamate from glutamate and acetyl-CoA, and of ornithine by transacetylation between acetylornithine and glutamate. The chain is Arginine biosynthesis bifunctional protein ArgJ, chloroplastic from Sorghum bicolor (Sorghum).